Consider the following 581-residue polypeptide: Solute carrier family 15 member 3 (581 aa).

Positions 1 to 14 (MPAPRAREQPRVPG) are enriched in basic and acidic residues. A disordered region spans residues 1 to 26 (MPAPRAREQPRVPGERQPLLPRGARG). A helical transmembrane segment spans residues 38-58 (VLLVEMLERAAFFGVTANLVL). N-linked (GlcNAc...) asparagine glycans are attached at residues Asn61 and Asn66. Transmembrane regions (helical) follow at residues 76–96 (ALVF…LADV), 103–123 (AVAL…ATAF), and 155–175 (PYCA…ASSV). A glycan (N-linked (GlcNAc...) asparagine) is linked at Asn178. The helical transmembrane segment at 200 to 220 (NWFYWSINLGAVLSLLVVAFI) threads the bilayer. Residue Asn223 is glycosylated (N-linked (GlcNAc...) asparagine). 2 helical membrane-spanning segments follow: residues 232–252 (IPVG…PVFI) and 310–330 (FQVL…WMVY). Asn356 carries N-linked (GlcNAc...) asparagine glycosylation. Transmembrane regions (helical) follow at residues 369 to 389 (TIPE…LVPL) and 411 to 431 (MALG…LEME). N-linked (GlcNAc...) asparagine glycosylation occurs at Asn439. 3 consecutive transmembrane segments (helical) span residues 458 to 478 (IWWQ…ASIP), 497 to 517 (GIFF…VALL), and 540 to 560 (LYFF…VWIA).

The protein belongs to the major facilitator superfamily. Proton-dependent oligopeptide transporter (POT/PTR) (TC 2.A.17) family.

The protein resides in the lysosome membrane. It localises to the endosome membrane. The catalysed reaction is glycylglycylglycine(out) + n H(+)(out) = glycylglycylglycine(in) + n H(+)(in). It catalyses the reaction carnosine(out) + n H(+)(out) = carnosine(in) + n H(+)(in). It carries out the reaction L-histidine(out) + n H(+)(out) = L-histidine(in) + n H(+)(in). The enzyme catalyses N-acetyl-D-muramoyl-L-alanyl-D-isoglutamine(out) + n H(+)(out) = N-acetyl-D-muramoyl-L-alanyl-D-isoglutamine(in) + n H(+)(in). In terms of biological role, proton-coupled amino-acid transporter that transports free histidine and certain di- and tripeptides, and is involved in innate immune response. Also able to transport carnosine. Involved in the detection of microbial pathogens by toll-like receptors (TLRs) and NOD-like receptors (NLRs), probably by mediating transport of bacterial peptidoglycans across the endolysosomal membrane: catalyzes the transport of certain bacterial peptidoglycans, such as muramyl dipeptide (MDP), the NOD2 ligand. The sequence is that of Solute carrier family 15 member 3 from Homo sapiens (Human).